Here is a 324-residue protein sequence, read N- to C-terminus: Endochitinase A2 (324 aa).

The N-terminal stretch at 1-20 is a signal peptide; that stretch reads MSKLRIPILLVLFIVSCCSA. The region spanning 21-61 is the Chitin-binding type-1 domain; the sequence is EQCGTQAGGALCPGGLCCSKFGWCGSTSEYCGDGCQSQCSG. Disulfide bonds link Cys-23–Cys-38, Cys-32–Cys-44, Cys-37–Cys-51, and Cys-55–Cys-59. The active-site Proton donor is the Glu-133. 2 cysteine pairs are disulfide-bonded: Cys-151/Cys-170 and Cys-269/Cys-301. A propeptide spans 310 to 324 (removed in mature form); that stretch reads SLPLSSILLDTVAAA.

This sequence belongs to the glycosyl hydrolase 19 family. Chitinase class I subfamily.

The catalysed reaction is Random endo-hydrolysis of N-acetyl-beta-D-glucosaminide (1-&gt;4)-beta-linkages in chitin and chitodextrins.. Functionally, defense against chitin-containing fungal pathogens. The sequence is that of Endochitinase A2 (CHI2) from Pisum sativum (Garden pea).